A 226-amino-acid chain; its full sequence is Charged multivesicular body protein 4 (226 aa).

Residues 22 to 88 are a coiled coil; sequence IQKLRETENM…DGTLSTIEMQ (67 aa). A disordered region spans residues 169–226; that stretch reads QENFDKEIIGIPEPTPTLPEAPTEDLPEKAKEKKKATTTTAVEDDDDPDMKQLLSWSN.

It belongs to the SNF7 family. As to quaternary structure, homopolymer; forms elongated striated filaments of uniform ~10nm width. Monomers interact in a staggered arrangement mediated by complementary charged electrostatic surfaces. Interacts with l(2)gd1 (via DM14 domains 1 and 3); the interaction is direct and blocks access to the surface involved in homopolymerization. This interaction may be required for the ESCRT-III complex role in multivesicular body formation. As to expression, expressed at considerably higher levels in testis than in ovary. Expressed in midgut, eye, mouthparts and male accessory gland.

It localises to the endosome. It is found in the multivesicular body. Its subcellular location is the midbody. With respect to regulation, may be regulated by aurB/Aurora kinase B-dependent phosphorylation. Its function is as follows. Probable core polymerisation component of the endosomal sorting required for transport (ESCRT) III complex involved in multiple cellular processes requiring the outward bending of membranes, including vesicle budding, membrane repair and cytokinesis. The ESCRT pathway involves 4 complexes (ESCRT-0, -I, -II and -III) that sequentially assemble on the cytoplasmic side of membranes and induce membrane remodeling, budding and scission. As part of the ESCRT-III complex, involved in the budding of intraluminal vesicles (ILVs) into endosomes to form multivesicular bodies (MVBs), which target their contents for degradation via the endolysosomal pathway. Involved in regulation of signal transduction pathways, including the Notch and BMP/decapentaplegic (dpp) pathways, by sequestering the intracellular domains of activated receptors into ILVs, isolating them from the cytoplasm and targeting them for lysosomal degradation. Involved in targeting ubiquitilated proteins, such as mono-ubiquitilanated N/Notch, to MVBs for degradation. Plays a role in wing development by regulating Notch signaling. Involved in abscission of germline cells during oogenesis. Involved in spermiogenesis. Required for efficient cytoplasmic isolation and abscission during cytokinesis of epithelial sensory organ precursor cells. May be involved in septate junction remodeling and maintenance. This Drosophila melanogaster (Fruit fly) protein is Charged multivesicular body protein 4.